Here is a 476-residue protein sequence, read N- to C-terminus: 8-amino-7-oxononanoate synthase (476 aa).

Substrate is bound at residue Arg-24. A pyridoxal 5'-phosphate-binding site is contributed by Gly-171–Phe-172. His-210 contributes to the substrate binding site. Pyridoxal 5'-phosphate contacts are provided by residues Ser-260, Asp-285–His-288, and Thr-316–Lys-319. The residue at position 319 (Lys-319) is an N6-(pyridoxal phosphate)lysine. Thr-427 contacts substrate. Residues Pro-474–Leu-476 carry the Peroxisomal targeting signal PTS1 motif.

It belongs to the class-II pyridoxal-phosphate-dependent aminotransferase family. BioF subfamily. Monomer. It depends on pyridoxal 5'-phosphate as a cofactor.

Its subcellular location is the cytoplasm. The protein resides in the cytosol. It is found in the peroxisome. The enzyme catalyses 6-carboxyhexanoyl-[ACP] + L-alanine + H(+) = (8S)-8-amino-7-oxononanoate + holo-[ACP] + CO2. It functions in the pathway cofactor biosynthesis; biotin biosynthesis; 8-amino-7-oxononanoate from pimeloyl-CoA: step 1/1. In terms of biological role, catalyzes the decarboxylative condensation of pimeloyl-[acyl-carrier protein] and L-alanine to produce 8-amino-7-oxononanoate (AON), [acyl-carrier protein], and carbon dioxide. Required for the biosynthesis of D-biotin that prevents light-mediated cell death and modulates defense gene expression, probably by avoiding hydrogen peroxide H(2)O(2) accumulation. In Arabidopsis thaliana (Mouse-ear cress), this protein is 8-amino-7-oxononanoate synthase.